The sequence spans 220 residues: Probable chemoreceptor glutamine deamidase CheD (220 aa).

Belongs to the CheD family.

It catalyses the reaction L-glutaminyl-[protein] + H2O = L-glutamyl-[protein] + NH4(+). Functionally, probably deamidates glutamine residues to glutamate on methyl-accepting chemotaxis receptors (MCPs), playing an important role in chemotaxis. This chain is Probable chemoreceptor glutamine deamidase CheD, found in Cupriavidus metallidurans (strain ATCC 43123 / DSM 2839 / NBRC 102507 / CH34) (Ralstonia metallidurans).